A 170-amino-acid polypeptide reads, in one-letter code: Peroxidase 2 (170 aa).

Residue N9 is glycosylated (N-linked (GlcNAc...) asparagine). H24 lines the heme b pocket. T25 provides a ligand contact to Ca(2+). A disulfide bridge connects residues C31 and C59. Ca(2+) is bound by residues D73, T76, and D81.

The protein belongs to the peroxidase family. Classical plant (class III) peroxidase subfamily. Requires Ca(2+) as cofactor. It depends on heme b as a cofactor.

It carries out the reaction 2 a phenolic donor + H2O2 = 2 a phenolic radical donor + 2 H2O. Functionally, removal of H(2)O(2), oxidation of toxic reductants, biosynthesis and degradation of lignin, suberization, auxin catabolism, response to environmental stresses such as wounding, pathogen attack and oxidative stress. These functions might be dependent on each isozyme/isoform in each plant tissue. Its function is as follows. Involved in defense response to powdery meldew fungus. The protein is Peroxidase 2 of Hordeum vulgare (Barley).